The following is a 74-amino-acid chain: Small ribosomal subunit protein bS21 (74 aa).

The protein belongs to the bacterial ribosomal protein bS21 family.

This Coxiella burnetii (strain Dugway 5J108-111) protein is Small ribosomal subunit protein bS21.